Reading from the N-terminus, the 274-residue chain is HTH-type transcriptional regulator GadX (274 aa).

Positions 145-242 (TRVCTVINNN…GMTPTEYQER (98 aa)) constitute an HTH araC/xylS-type domain. 2 consecutive DNA-binding regions (H-T-H motif) follow at residues 162-183 (ARIASELLMSPSLLKKKLREEG) and 209-232 (IKRVAVSCGYHSVSYFIYVFRNYY).

In terms of assembly, homodimer.

Positively regulates the expression of about fifteen genes involved in acid resistance such as gadA, gadB and gadC. Depending on the conditions (growth phase and medium), can repress gadW. This chain is HTH-type transcriptional regulator GadX (gadX), found in Escherichia coli O6:H1 (strain CFT073 / ATCC 700928 / UPEC).